A 456-amino-acid polypeptide reads, in one-letter code: Alcohol acyltransferase 1 (456 aa).

Active-site proton acceptor residues include histidine 166 and aspartate 382.

Belongs to the plant acyltransferase family.

Functionally, involved in the biosynthesis of volatile esters which confer kiwifruit flavor. Alcohol acyl transferase that can use a wide range of alcohols as substrate to produce esters. The polypeptide is Alcohol acyltransferase 1 (Actinidia chinensis var. chinensis (Chinese soft-hair kiwi)).